A 476-amino-acid polypeptide reads, in one-letter code: Deoxyguanosinetriphosphate triphosphohydrolase-like protein 2 (476 aa).

The interval 1-20 is disordered; that stretch reads MYTDADRSREVVPEKDGHDK. One can recognise an HD domain in the interval 60–233; it reads RLTHSLEVAQ…MDLADDIAYS (174 aa).

Belongs to the dGTPase family. Type 2 subfamily.

The chain is Deoxyguanosinetriphosphate triphosphohydrolase-like protein 2 from Mesorhizobium japonicum (strain LMG 29417 / CECT 9101 / MAFF 303099) (Mesorhizobium loti (strain MAFF 303099)).